Consider the following 105-residue polypeptide: Large ribosomal subunit protein uL24 (105 aa).

This sequence belongs to the universal ribosomal protein uL24 family. In terms of assembly, part of the 50S ribosomal subunit.

Its function is as follows. One of two assembly initiator proteins, it binds directly to the 5'-end of the 23S rRNA, where it nucleates assembly of the 50S subunit. One of the proteins that surrounds the polypeptide exit tunnel on the outside of the subunit. This Xanthomonas oryzae pv. oryzae (strain MAFF 311018) protein is Large ribosomal subunit protein uL24.